The chain runs to 377 residues: Hsc70-interacting protein 2 (377 aa).

The interval 68-123 is disordered; sequence AKANEPANAPEDSEDEKSLSDPESDVELDMEGVIEADSDPAQPMGNYSKKATEEEV. A Phosphoserine modification is found at Ser-80. The segment covering 89–105 has biased composition (acidic residues); that stretch reads PESDVELDMEGVIEADS. TPR repeat units follow at residues 126–159, 161–193, and 195–227; these read ASEL…SPGN, LFHA…NSDL, and AGYK…DFDE. Positions 239–276 form a coiled coil; it reads NAKKIEQHRLKQERRQAERKIKERQRDQRRARKEQEKH. A compositionally biased stretch (basic and acidic residues) spans 243-277; that stretch reads IEQHRLKQERRQAERKIKERQRDQRRARKEQEKHN. Disordered stretches follow at residues 243–302 and 344–377; these read IEQH…DILG and DVGA…DGLD. A compositionally biased stretch (gly residues) spans 282-293; it reads GSSGEFSGGNPG. Positions 294 to 336 constitute an STI1 domain; that stretch reads NGNMSDILGAMSDPEVSAAIQDILSNPGNITKYASNPKIYNLI. Residues 355-369 are compositionally biased toward basic and acidic residues; that stretch reads KAGKPSEPKPKKDSA.

Belongs to the FAM10 family. Homotetramer. Interacts with Hsc70 as well as DNAJ homologs and Hsp90.

It localises to the cytoplasm. In terms of biological role, one HIP oligomer binds the ATPase domains of at least two Hsc70 molecules dependent on activation of the Hsc70 ATPase by Hsp40. Stabilizes the ADP state of Hsc70 that has a high affinity for substrate protein. Through its own chaperone activity, it may contribute to the interaction of Hsc70 with various target proteins. The protein is Hsc70-interacting protein 2 of Drosophila melanogaster (Fruit fly).